We begin with the raw amino-acid sequence, 83 residues long: Small ribosomal subunit protein bS20 (83 aa).

Residues 1 to 11 are compositionally biased toward basic residues; the sequence is MANHKSAAKRA. Residues 1–44 form a disordered region; it reads MANHKSAAKRAKQSEARRLRNKSTRSSMNTAVKKVRTAKEAGTD.

It belongs to the bacterial ribosomal protein bS20 family.

In terms of biological role, binds directly to 16S ribosomal RNA. The polypeptide is Small ribosomal subunit protein bS20 (Desulforapulum autotrophicum (strain ATCC 43914 / DSM 3382 / VKM B-1955 / HRM2) (Desulfobacterium autotrophicum)).